The following is a 216-amino-acid chain: Protein-L-isoaspartate O-methyltransferase (216 aa).

Residue Ser-61 is part of the active site.

Belongs to the methyltransferase superfamily. L-isoaspartyl/D-aspartyl protein methyltransferase family.

Its subcellular location is the cytoplasm. It catalyses the reaction [protein]-L-isoaspartate + S-adenosyl-L-methionine = [protein]-L-isoaspartate alpha-methyl ester + S-adenosyl-L-homocysteine. Functionally, catalyzes the methyl esterification of L-isoaspartyl residues in peptides and proteins that result from spontaneous decomposition of normal L-aspartyl and L-asparaginyl residues. It plays a role in the repair and/or degradation of damaged proteins. The sequence is that of Protein-L-isoaspartate O-methyltransferase (pcm) from Pyrococcus abyssi (strain GE5 / Orsay).